The following is a 358-amino-acid chain: Aminomethyltransferase (358 aa).

Belongs to the GcvT family. As to quaternary structure, the glycine cleavage system is composed of four proteins: P, T, L and H.

The enzyme catalyses N(6)-[(R)-S(8)-aminomethyldihydrolipoyl]-L-lysyl-[protein] + (6S)-5,6,7,8-tetrahydrofolate = N(6)-[(R)-dihydrolipoyl]-L-lysyl-[protein] + (6R)-5,10-methylene-5,6,7,8-tetrahydrofolate + NH4(+). Its function is as follows. The glycine cleavage system catalyzes the degradation of glycine. In Francisella tularensis subsp. holarctica (strain FTNF002-00 / FTA), this protein is Aminomethyltransferase.